A 475-amino-acid polypeptide reads, in one-letter code: tRNA-2-methylthio-N(6)-dimethylallyladenosine synthase (475 aa).

The MTTase N-terminal domain maps to Arg-7–Asp-127. [4Fe-4S] cluster contacts are provided by Cys-16, Cys-52, Cys-90, Cys-168, Cys-172, and Cys-175. One can recognise a Radical SAM core domain in the interval Arg-154–Gln-388. The 63-residue stretch at Arg-394–Ser-456 folds into the TRAM domain.

Belongs to the methylthiotransferase family. MiaB subfamily. As to quaternary structure, monomer. [4Fe-4S] cluster serves as cofactor.

The protein localises to the cytoplasm. It catalyses the reaction N(6)-dimethylallyladenosine(37) in tRNA + (sulfur carrier)-SH + AH2 + 2 S-adenosyl-L-methionine = 2-methylsulfanyl-N(6)-dimethylallyladenosine(37) in tRNA + (sulfur carrier)-H + 5'-deoxyadenosine + L-methionine + A + S-adenosyl-L-homocysteine + 2 H(+). Catalyzes the methylthiolation of N6-(dimethylallyl)adenosine (i(6)A), leading to the formation of 2-methylthio-N6-(dimethylallyl)adenosine (ms(2)i(6)A) at position 37 in tRNAs that read codons beginning with uridine. This is tRNA-2-methylthio-N(6)-dimethylallyladenosine synthase from Afipia carboxidovorans (strain ATCC 49405 / DSM 1227 / KCTC 32145 / OM5) (Oligotropha carboxidovorans).